We begin with the raw amino-acid sequence, 101 residues long: Large ribosomal subunit protein eL43 (101 aa).

Residues Cys-40, Cys-43, Cys-59, and Cys-62 each contribute to the Zn(2+) site. The C4-type zinc finger occupies 40–62 (CPSCRSLVRLERIAFGIWRCPKC).

Belongs to the eukaryotic ribosomal protein eL43 family. Putative zinc-binding subfamily. Part of the 50S ribosomal subunit. Zn(2+) serves as cofactor.

Binds to the 23S rRNA. The sequence is that of Large ribosomal subunit protein eL43 from Pyrobaculum aerophilum (strain ATCC 51768 / DSM 7523 / JCM 9630 / CIP 104966 / NBRC 100827 / IM2).